Consider the following 106-residue polypeptide: HIG1 domain family member 2A, mitochondrial (106 aa).

Alanine 2 bears the N-acetylalanine mark. The HIG1 domain occupies 20–106 (VIEGLSPTVY…LAVTAMKSRP (87 aa)). The next 2 helical transmembrane spans lie at 47–67 (PVVP…LYSF) and 83–103 (IAAQ…TAMK). Residues 104–106 (SRP) lie on the Mitochondrial matrix side of the membrane.

Associates with cytochrome c oxidase (COX, complex IV); proposed complex component.

Its subcellular location is the mitochondrion membrane. The protein localises to the mitochondrion inner membrane. Its function is as follows. Proposed subunit of cytochrome c oxidase (COX, complex IV), which is the terminal component of the mitochondrial respiratory chain that catalyzes the reduction of oxygen to water. May be involved in cytochrome c oxidase activity. May play a role in the assembly of respiratory supercomplexes. This is HIG1 domain family member 2A, mitochondrial (HIGD2A) from Homo sapiens (Human).